Reading from the N-terminus, the 56-residue chain is UPF0434 protein Sden_2197 (56 aa).

Belongs to the UPF0434 family.

The sequence is that of UPF0434 protein Sden_2197 from Shewanella denitrificans (strain OS217 / ATCC BAA-1090 / DSM 15013).